A 104-amino-acid polypeptide reads, in one-letter code: V-type ATP synthase subunit F (104 aa).

Belongs to the V-ATPase F subunit family.

In terms of biological role, produces ATP from ADP in the presence of a proton gradient across the membrane. This Thermus thermophilus (strain ATCC BAA-163 / DSM 7039 / HB27) protein is V-type ATP synthase subunit F.